Consider the following 379-residue polypeptide: Cobalt-precorrin-5B C(1)-methyltransferase (379 aa).

Belongs to the CbiD family.

The enzyme catalyses Co-precorrin-5B + S-adenosyl-L-methionine = Co-precorrin-6A + S-adenosyl-L-homocysteine. Its pathway is cofactor biosynthesis; adenosylcobalamin biosynthesis; cob(II)yrinate a,c-diamide from sirohydrochlorin (anaerobic route): step 6/10. Catalyzes the methylation of C-1 in cobalt-precorrin-5B to form cobalt-precorrin-6A. The chain is Cobalt-precorrin-5B C(1)-methyltransferase from Salmonella typhimurium (strain LT2 / SGSC1412 / ATCC 700720).